The primary structure comprises 252 residues: MPAPVVKKPAAKKLPAVPESKLKFSKKQISKRVAESKRRLKKAAVIALRKKENLVRAEKYQNEYIKAEQREIKLRRLAKKRNQFYVPAEAKLAFVVRIRGINKVAPKVRKVLQLFRLRQINNGVFIKLNKATINMLRIAEPYITWGYPNLKSVRELIYKRGFVKHNRQRVPITDNFVIERKLRQAHQIQCVEDLVHEIFTVGPNFKYASNFLWPFKLNTPTGGWRKKANHYVNGGDFGNREDQINRLLRKMV.

Belongs to the universal ribosomal protein uL30 family.

Functionally, binds to G-rich structures in 28S rRNA and in mRNAs. Plays a regulatory role in the translation apparatus; inhibits cell-free translation of mRNAs. This is Large ribosomal subunit protein uL30 (RpL7) from Drosophila melanogaster (Fruit fly).